Here is a 68-residue protein sequence, read N- to C-terminus: UPF0434 protein BURPS668_0926 (68 aa).

This sequence belongs to the UPF0434 family.

In Burkholderia pseudomallei (strain 668), this protein is UPF0434 protein BURPS668_0926.